We begin with the raw amino-acid sequence, 184 residues long: MTRSSIELGDVTPHNIKQLKKLNTVVFPVSYNDKFYVDVLEAGELAKLAYYNDIVVGAVCCRIDNTENQRRLYIMTLGCLSPYRRLGIGTVMFEHIMNFAEKDGNFDSIFLHVQINNNGAIEFYKKFGFEIVDTKEQYYKRIEPADAHVLQKTLRRTAPNSNSTATSTTANSNSRSKARQFTFV.

An N-acetyltransferase domain is found at 6-155; it reads IELGDVTPHN…DAHVLQKTLR (150 aa). Y31 serves as a coordination point for substrate. Position 47 is an N6-acetyllysine; by autocatalysis (K47). The active site involves Y73. Position 75 (M75) interacts with substrate. Residue 77-90 coordinates acetyl-CoA; sequence LGCLSPYRRLGIGT. The active site involves H112. 117–126 contacts CoA; that stretch reads NNGAIEFYKK. The segment at 138 to 141 is substrate; that stretch reads YYKR. Low complexity predominate over residues 157 to 174; that stretch reads TAPNSNSTATSTTANSNS. The disordered stretch occupies residues 157–176; it reads TAPNSNSTATSTTANSNSRS.

Belongs to the acetyltransferase family. In terms of assembly, component of an acetyltransferase complex, at least composed of san, Ard1 and Nat1. Post-translationally, autoacetylated.

The protein localises to the cytoplasm. The enzyme catalyses N-terminal L-methionyl-L-alanyl-[protein] + acetyl-CoA = N-terminal N(alpha)-acetyl-L-methionyl-L-alanyl-[protein] + CoA + H(+). The catalysed reaction is N-terminal L-methionyl-L-seryl-[protein] + acetyl-CoA = N-terminal N(alpha)-acetyl-L-methionyl-L-seryl-[protein] + CoA + H(+). It catalyses the reaction N-terminal L-methionyl-L-valyl-[protein] + acetyl-CoA = N-terminal N(alpha)-acetyl-L-methionyl-L-valyl-[protein] + CoA + H(+). It carries out the reaction N-terminal L-methionyl-L-threonyl-[protein] + acetyl-CoA = N-terminal N(alpha)-acetyl-L-methionyl-L-threonyl-[protein] + CoA + H(+). The enzyme catalyses N-terminal L-methionyl-L-lysyl-[protein] + acetyl-CoA = N-terminal N(alpha)-acetyl-L-methionyl-L-lysyl-[protein] + CoA + H(+). The catalysed reaction is N-terminal L-methionyl-L-leucyl-[protein] + acetyl-CoA = N-terminal N(alpha)-acetyl-L-methionyl-L-leucyl-[protein] + CoA + H(+). It catalyses the reaction N-terminal L-methionyl-L-phenylalanyl-[protein] + acetyl-CoA = N-terminal N(alpha)-acetyl-L-methionyl-L-phenylalanyl-[protein] + CoA + H(+). It carries out the reaction N-terminal L-methionyl-L-tyrosyl-[protein] + acetyl-CoA = N-terminal N(alpha)-acetyl-L-methionyl-L-tyrosyl-[protein] + CoA + H(+). Functionally, N-alpha-acetyltransferase that acetylates the N-terminus of proteins that retain their initiating methionine. Has a broad substrate specificity: able to acetylate the initiator methionine of most peptides. Also displays N-epsilon-acetyltransferase activity by mediating acetylation of the side chain of specific lysines on proteins. Autoacetylates. Required for the establishment of sister chromatid cohesion and couple the processes of cohesion and DNA replication to ensure that only sister chromatids become paired together. Required for the interaction between Scc1/vtd and SMC3, possibly by mediating N-terminal acetylation of Scc1/vtd. Its function is as follows. (Microbial infection) Required for optimal replication of E.chaffeensis in the immune tissues, hemocytes, and fat body. This Drosophila melanogaster (Fruit fly) protein is Probable N-acetyltransferase san (san).